The sequence spans 155 residues: F-box only protein 48 (155 aa).

Positions 1-27 are disordered; it reads MHKNSKRNNNLRVSHTEANSVDAEKEK. The span at 7–19 shows a compositional bias: polar residues; that stretch reads RNNNLRVSHTEAN. The F-box domain occupies 32–79; sequence NNFFELLPAEITFKIFSQLDIRSLCRASLTCRSWNDTIRNSDSLWKPH.

The protein is F-box only protein 48 (FBXO48) of Homo sapiens (Human).